Consider the following 198-residue polypeptide: Recombination protein RecR (198 aa).

The C4-type zinc-finger motif lies at 57–72; sequence CSICGNLTESDPCAIC. In terms of domain architecture, Toprim spans 80 to 175; it reads TTILVVEESK…KVTRLARGLA (96 aa).

It belongs to the RecR family.

Its function is as follows. May play a role in DNA repair. It seems to be involved in an RecBC-independent recombinational process of DNA repair. It may act with RecF and RecO. This Lactococcus lactis subsp. cremoris (strain MG1363) protein is Recombination protein RecR.